Consider the following 504-residue polypeptide: MGFSVFSPTRSLDGVSGFFQGAFLLSLFLVLFKAVQFYLRRQWLLKALEKFPSTPSHWLWGHNLKDREFQQVLTWVEKFPGACLQWLSGSTARVLLYDPDYVKVVLGRSDPKPYQSLAPWIGYGLLLLNGKKWFQHRRMLTPAFHYDILKPYVKIMADSVSIMLDKWEKLDDQDHPLEIFHYVSLMTLDTVMKCAFSHQGSVQLDVNSRSYTKAVEDLNNLIFFRVRSAFYGNSIIYNMSSDGRLSRRACQIAHEHTDGVIKTRKAQLQNEEELQKARKKRHLDFLDILLFAKMEDGKSLSDEDLRAEVDTFMFEGHDTTASGISWVFYALATHPEHQERCREEVQSILGDGTSVTWDHLDQMPYTTMCIKEALRLYSPVPSVSRELSSPVTFPDGRSIPKGIRVTILIYGLHHNPSYWPNPKVFDPSRFSPDSPRHSHAYLPFSGGARNCIGKQFAMNELKVAVALTLLRFELLPDPTRIPVPMPRLVLKSKNGIHLRLKKLR.

Residues 1–4 (MGFS) constitute a propeptide that is removed on maturation. Position 315 (Glu-315) interacts with heme. Ser-434 is subject to Phosphoserine. Cys-451 is a binding site for heme.

It belongs to the cytochrome P450 family. Requires heme as cofactor.

Its subcellular location is the endoplasmic reticulum membrane. The protein resides in the microsome membrane. It catalyses the reaction an omega-methyl-long-chain fatty acid + reduced [NADPH--hemoprotein reductase] + O2 = an omega-hydroxy-long-chain fatty acid + oxidized [NADPH--hemoprotein reductase] + H2O + H(+). The catalysed reaction is dodecanoate + reduced [NADPH--hemoprotein reductase] + O2 = (11R)-hydroxydodecanoate + oxidized [NADPH--hemoprotein reductase] + H2O + H(+). It carries out the reaction dodecanoate + reduced [NADPH--hemoprotein reductase] + O2 = 12-hydroxydodecanoate + oxidized [NADPH--hemoprotein reductase] + H2O + H(+). The enzyme catalyses tetradecanoate + reduced [NADPH--hemoprotein reductase] + O2 = 14-hydroxytetradecanoate + oxidized [NADPH--hemoprotein reductase] + H2O + H(+). It catalyses the reaction hexadecanoate + reduced [NADPH--hemoprotein reductase] + O2 = 16-hydroxyhexadecanoate + oxidized [NADPH--hemoprotein reductase] + H2O + H(+). It functions in the pathway lipid metabolism; fatty acid metabolism. Functionally, a cytochrome P450 monooxygenase that catalyzes omega and omega-1 hydroxylation of saturated fatty acids. Exhibits preferential omega versus omega-1 regioselectivity and (R) versus (S) stereoselectivity for hydroxylation of lauric and myristic acids. Has low activity toward palmitic acid. Mechanistically, uses molecular oxygen inserting one oxygen atom into a substrate, and reducing the second into a water molecule, with two electrons provided by NADPH via cytochrome P450 reductase (CPR; NADPH-ferrihemoprotein reductase). The protein is Cytochrome P450 4A2 of Rattus norvegicus (Rat).